The primary structure comprises 124 residues: Small ribosomal subunit protein uS13 (124 aa).

The segment at 94 to 124 is disordered; the sequence is RGMPVRGQRTKTNARTRKGPKRTIAGKKKAR.

This sequence belongs to the universal ribosomal protein uS13 family. In terms of assembly, part of the 30S ribosomal subunit. Forms a loose heterodimer with protein S19. Forms two bridges to the 50S subunit in the 70S ribosome.

Its function is as follows. Located at the top of the head of the 30S subunit, it contacts several helices of the 16S rRNA. In the 70S ribosome it contacts the 23S rRNA (bridge B1a) and protein L5 of the 50S subunit (bridge B1b), connecting the 2 subunits; these bridges are implicated in subunit movement. Contacts the tRNAs in the A and P-sites. This chain is Small ribosomal subunit protein uS13, found in Mycobacterium tuberculosis (strain ATCC 25177 / H37Ra).